The following is a 70-amino-acid chain: Large ribosomal subunit protein bL31 (70 aa).

Zn(2+) contacts are provided by Cys-16, Cys-18, Cys-37, and Cys-40.

The protein belongs to the bacterial ribosomal protein bL31 family. Type A subfamily. In terms of assembly, part of the 50S ribosomal subunit. Requires Zn(2+) as cofactor.

In terms of biological role, binds the 23S rRNA. In Actinobacillus pleuropneumoniae serotype 5b (strain L20), this protein is Large ribosomal subunit protein bL31.